An 802-amino-acid chain; its full sequence is MDNRGSFFFLLIVFYLLLSSQSRPPLLDQDRERQREVARERDALRLLNESKYGDFDPPGDKWLPFAGTRKNDSYAWGILPEAQGRARHQLRSAISNAGLEPPRSLEDPDALPSLNLTQLLLPVYRNATGKLRGDWVRRKLNKEYPKLNTTAIALEHGYFTHEFGLNITGSSGTFYLDLREGGGEELRVDSGQVREIRATLAVESNDFWGNTWYISLFGVHFPETGAIILSSNSEKFEGLFVLPHLAFSSDAYELSHQLLLNSLSDTLSEKENRPPTLFPWSSLIGSEQVEFPAPKCEHIIYLQQHPVTIHDYLADKPVVDQIEEELRFPIGAPVPPAPLMVMSAVVFSPDCGYILETKGTPDFPPSEGLYLTGPKIEEYDKYSARLVFIICGVFAAQITLLLRQIKEASTPSTRSRISFYTIALMAFGDAFVLIFILLELYPAVSFLVMATAAFLTFLSVSYIGMKFMMEIWAVQAPERREQERRSNPPASTPRSTGLPLPATSAPVRDSGATPIILTPDQDPPAEEDDQPTNRGTTSAAQETRNDVGAMYARFYFVLFVMLIISIWSFLWPNRLGALYARALAFVYLSFWTPQIGRNIIRNCRKALRWDFVIGQSILRLFPFVYFLTVRGNVLFIHPDTTTAFALAGWVWIQVWVLASQDILGPRFFVPRGWAPAAYDYHPILRDGDESEADLESGGVLPIGALRAEDLSGDAKDEDKQRTKDRKRAVFDCAICMQEIEVPVLAARGSAGGSSVTEGATSILSRRTYMVTPCRHIFHSTCLESWMRLRLQCPICRESIPPV.

The N-terminal stretch at 1-22 (MDNRGSFFFLLIVFYLLLSSQS) is a signal peptide. Topologically, residues 23–381 (RPPLLDQDRE…TGPKIEEYDK (359 aa)) are lumenal. N48, N71, N115, N126, N148, and N166 each carry an N-linked (GlcNAc...) asparagine glycan. A helical membrane pass occupies residues 382 to 402 (YSARLVFIICGVFAAQITLLL). The Cytoplasmic portion of the chain corresponds to 403-429 (RQIKEASTPSTRSRISFYTIALMAFGD). The chain crosses the membrane as a helical span at residues 430–450 (AFVLIFILLELYPAVSFLVMA). Over 451-453 (TAA) the chain is Lumenal. A helical transmembrane segment spans residues 454 to 474 (FLTFLSVSYIGMKFMMEIWAV). Residues 475–550 (QAPERREQER…QETRNDVGAM (76 aa)) are Cytoplasmic-facing. Positions 478–541 (ERREQERRSN…TNRGTTSAAQ (64 aa)) are disordered. Over residues 532–541 (TNRGTTSAAQ) the composition is skewed to polar residues. The helical transmembrane segment at 551-571 (YARFYFVLFVMLIISIWSFLW) threads the bilayer. Over 572-574 (PNR) the chain is Lumenal. The chain crosses the membrane as a helical span at residues 575–595 (LGALYARALAFVYLSFWTPQI). The Cytoplasmic portion of the chain corresponds to 596 to 608 (GRNIIRNCRKALR). A helical transmembrane segment spans residues 609 to 629 (WDFVIGQSILRLFPFVYFLTV). Residues 630 to 642 (RGNVLFIHPDTTT) are Lumenal-facing. The chain crosses the membrane as a helical span at residues 643 to 663 (AFALAGWVWIQVWVLASQDIL). Residues 664 to 802 (GPRFFVPRGW…PICRESIPPV (139 aa)) lie on the Cytoplasmic side of the membrane. An RING-type; atypical zinc finger spans residues 732–796 (CAICMQEIEV…RLRLQCPICR (65 aa)).

As to quaternary structure, component of the DSC E3 ubiquitin ligase complex composed of dscA, dscB, dscC and dscD.

It localises to the endoplasmic reticulum membrane. It carries out the reaction S-ubiquitinyl-[E2 ubiquitin-conjugating enzyme]-L-cysteine + [acceptor protein]-L-lysine = [E2 ubiquitin-conjugating enzyme]-L-cysteine + N(6)-ubiquitinyl-[acceptor protein]-L-lysine.. The protein operates within protein modification; protein ubiquitination. Catalytic component of the DSC E3 ubiquitin ligase complex which is required for the srbA transcriptional activator proteolytic cleavage to release the soluble transcription factor from the membrane in low oxygen or sterol conditions. Required for growth during hypoxia and triazole drug susceptibility, as well as for virulence in a murine model of invasive pulmonary aspergillosis (IPA). In Aspergillus fumigatus (strain CBS 144.89 / FGSC A1163 / CEA10) (Neosartorya fumigata), this protein is DSC E3 ubiquitin ligase complex subunit A.